The following is a 269-amino-acid chain: Thiazole synthase (269 aa).

Residue Lys-112 is the Schiff-base intermediate with DXP of the active site. Residues Gly-173, 199–200 (AG), and 221–222 (NT) each bind 1-deoxy-D-xylulose 5-phosphate.

This sequence belongs to the ThiG family. As to quaternary structure, homotetramer. Forms heterodimers with either ThiH or ThiS.

It is found in the cytoplasm. The catalysed reaction is [ThiS sulfur-carrier protein]-C-terminal-Gly-aminoethanethioate + 2-iminoacetate + 1-deoxy-D-xylulose 5-phosphate = [ThiS sulfur-carrier protein]-C-terminal Gly-Gly + 2-[(2R,5Z)-2-carboxy-4-methylthiazol-5(2H)-ylidene]ethyl phosphate + 2 H2O + H(+). It functions in the pathway cofactor biosynthesis; thiamine diphosphate biosynthesis. In terms of biological role, catalyzes the rearrangement of 1-deoxy-D-xylulose 5-phosphate (DXP) to produce the thiazole phosphate moiety of thiamine. Sulfur is provided by the thiocarboxylate moiety of the carrier protein ThiS. In vitro, sulfur can be provided by H(2)S. The chain is Thiazole synthase from Caulobacter vibrioides (strain ATCC 19089 / CIP 103742 / CB 15) (Caulobacter crescentus).